Reading from the N-terminus, the 120-residue chain is MSCATLPAEARLHRPSEFTAALKGRRLARGALFIVSAAPATSAPACARLGLVIAKRYAALATTRNAIKRVLREAFRHRRQALPAQDYVIRLHSKVGPLSLTALKRAARTEADAHFGRIAR.

This sequence belongs to the RnpA family. As to quaternary structure, consists of a catalytic RNA component (M1 or rnpB) and a protein subunit.

The enzyme catalyses Endonucleolytic cleavage of RNA, removing 5'-extranucleotides from tRNA precursor.. Its function is as follows. RNaseP catalyzes the removal of the 5'-leader sequence from pre-tRNA to produce the mature 5'-terminus. It can also cleave other RNA substrates such as 4.5S RNA. The protein component plays an auxiliary but essential role in vivo by binding to the 5'-leader sequence and broadening the substrate specificity of the ribozyme. The chain is Ribonuclease P protein component from Bordetella avium (strain 197N).